The chain runs to 485 residues: Glutamate--tRNA ligase (485 aa).

The short motif at 12 to 22 (PSPTGYMHVGN) is the 'HIGH' region element. 4 residues coordinate Zn(2+): Cys-109, Cys-111, Cys-136, and His-138. The 'KMSKS' region signature appears at 253-257 (KLSKR). Residue Lys-256 participates in ATP binding.

The protein belongs to the class-I aminoacyl-tRNA synthetase family. Glutamate--tRNA ligase type 1 subfamily. In terms of assembly, monomer. Zn(2+) is required as a cofactor.

The protein resides in the cytoplasm. It carries out the reaction tRNA(Glu) + L-glutamate + ATP = L-glutamyl-tRNA(Glu) + AMP + diphosphate. In terms of biological role, catalyzes the attachment of glutamate to tRNA(Glu) in a two-step reaction: glutamate is first activated by ATP to form Glu-AMP and then transferred to the acceptor end of tRNA(Glu). The polypeptide is Glutamate--tRNA ligase (Clostridium botulinum (strain Eklund 17B / Type B)).